The following is a 1400-amino-acid chain: DNA-directed RNA polymerase subunit beta' (1400 aa).

Zn(2+) contacts are provided by C71, C73, C86, and C89. The Mg(2+) site is built by D462, D464, and D466. Residues C811, C885, C892, and C895 each contribute to the Zn(2+) site.

Belongs to the RNA polymerase beta' chain family. As to quaternary structure, the RNAP catalytic core consists of 2 alpha, 1 beta, 1 beta' and 1 omega subunit. When a sigma factor is associated with the core the holoenzyme is formed, which can initiate transcription. Requires Mg(2+) as cofactor. Zn(2+) is required as a cofactor.

It carries out the reaction RNA(n) + a ribonucleoside 5'-triphosphate = RNA(n+1) + diphosphate. In terms of biological role, DNA-dependent RNA polymerase catalyzes the transcription of DNA into RNA using the four ribonucleoside triphosphates as substrates. This is DNA-directed RNA polymerase subunit beta' from Brucella ovis (strain ATCC 25840 / 63/290 / NCTC 10512).